The sequence spans 445 residues: Chromosome partition protein MukF (445 aa).

The tract at residues 212–240 (LDETSGNLRELQDTLNAAGDKLQEQLLRI) is leucine-zipper.

The protein belongs to the MukF family. As to quaternary structure, interacts, and probably forms a ternary complex, with MukE and MukB via its C-terminal region. The complex formation is stimulated by calcium or magnesium. It is required for an interaction between MukE and MukB.

Its subcellular location is the cytoplasm. It localises to the nucleoid. Functionally, involved in chromosome condensation, segregation and cell cycle progression. May participate in facilitating chromosome segregation by condensation DNA from both sides of a centrally located replisome during cell division. Not required for mini-F plasmid partitioning. Probably acts via its interaction with MukB and MukE. Overexpression results in anucleate cells. It has a calcium binding activity. This Mannheimia succiniciproducens (strain KCTC 0769BP / MBEL55E) protein is Chromosome partition protein MukF.